A 207-amino-acid polypeptide reads, in one-letter code: uncharacterized protein (207 aa).

Positions 14–201 (ARLINQAVEI…SPVILREGSG (188 aa)) constitute a YrdC-like domain.

This sequence belongs to the SUA5 family.

This is an uncharacterized protein from Haemophilus influenzae (strain ATCC 51907 / DSM 11121 / KW20 / Rd).